Here is a 595-residue protein sequence, read N- to C-terminus: Grainyhead-like protein 3 homolog (595 aa).

The segment at 29–92 (DAWSKYLENP…CDQVKRSCSE (64 aa)) is transcription activation. Residues 221–454 (ANRDFEYTLE…DMETHPVLFI (234 aa)) form the Grh/CP2 DB domain. Residues 484-505 (SSQSFPKGLEAPPSKQQTSEDS) form a disordered region.

It belongs to the grh/CP2 family. Grainyhead subfamily.

The protein resides in the nucleus. Transcription factor playing important roles in primary neurulation and in the differentiation of stratified epithelia of both ectodermal and endodermal origin. Binds directly to the consensus DNA sequence 5'-AACCGGTT-3' acting as an activator and repressor on distinct target genes. The polypeptide is Grainyhead-like protein 3 homolog (grhl3) (Xenopus laevis (African clawed frog)).